Here is a 258-residue protein sequence, read N- to C-terminus: NAD kinase (258 aa).

Residue Asp44 is the Proton acceptor of the active site. Residues 44–45, 116–117, Asp146, Ala154, and 157–162 contribute to the NAD(+) site; these read DG, NE, and TAYNLS.

It belongs to the NAD kinase family. A divalent metal cation serves as cofactor.

It localises to the cytoplasm. It carries out the reaction NAD(+) + ATP = ADP + NADP(+) + H(+). In terms of biological role, involved in the regulation of the intracellular balance of NAD and NADP, and is a key enzyme in the biosynthesis of NADP. Catalyzes specifically the phosphorylation on 2'-hydroxyl of the adenosine moiety of NAD to yield NADP. This Zymomonas mobilis subsp. mobilis (strain ATCC 31821 / ZM4 / CP4) protein is NAD kinase.